A 356-amino-acid polypeptide reads, in one-letter code: Carbohydrate sulfotransferase 10 (356 aa).

Residues 1-6 (MHHQWL) lie on the Cytoplasmic side of the membrane. A helical; Signal-anchor for type II membrane protein membrane pass occupies residues 7 to 27 (LLAACFWVIFMFMVASKFITL). Residues 28–356 (TFKDPDGYSA…GYQKPDFLLN (329 aa)) lie on the Lumenal side of the membrane. N99 is a glycosylation site (N-linked (GlcNAc...) asparagine). 3'-phosphoadenylyl sulfate-binding positions include 127–133 (PKVGNTQ) and 189–197 (RDPFERLIS). N-linked (GlcNAc...) asparagine glycosylation is found at N228 and N316.

The protein belongs to the sulfotransferase 2 family. In terms of tissue distribution, in myogenic progenitors, it is ubiquitously expressed.

The protein resides in the golgi apparatus membrane. The catalysed reaction is 3-O-{beta-D-GlcA-(1-&gt;[3)-alpha-D-Xyl-(1-&gt;3)-beta-D-GlcA-(1-&gt;](n)-4)-beta-D-Xyl-(1-&gt;4)-Rib-ol-P-Rib-ol-P-3-beta-D-GalNAc-(1-&gt;3)-beta-D-GlcNAc-(1-&gt;4)-O-6-P-alpha-D-Man}-L-Thr-[protein] + 3'-phosphoadenylyl sulfate = 3-O-{O-3-S-beta-D-GlcA-(1-&gt;[3)-alpha-D-Xyl-(1-&gt;3)-beta-D-GlcA-(1-&gt;](n)-4)-beta-D-Xyl-(1-&gt;4)-Rib-ol-P-Rib-ol-P-3-beta-D-GalNAc-(1-&gt;3)-beta-D-GlcNAc-(1-&gt;4)-O-6-P-alpha-D-Man}-L-Thr-[protein] + adenosine 3',5'-bisphosphate + H(+). It carries out the reaction 17beta-estradiol 3-O-(beta-D-glucuronate) + 3'-phosphoadenylyl sulfate = 17beta-estradiol 3-O-(3-sulfo-beta-D-glucuronate) + adenosine 3',5'-bisphosphate + H(+). It catalyses the reaction 17beta-estradiol 3-O-(beta-D-glucuronate) 17-sulfate + 3'-phosphoadenylyl sulfate = 17beta-estradiol 3-O-(3-sulfo-beta-D-glucuronate) 17-sulfate + adenosine 3',5'-bisphosphate + H(+). The enzyme catalyses 17beta-estradiol 17-O-(beta-D-glucuronate) + 3'-phosphoadenylyl sulfate = 17beta-estradiol 17-O-(3-sulfo-beta-D-glucuronate) + adenosine 3',5'-bisphosphate + H(+). The catalysed reaction is 16alpha,17beta-estriol 3-O-(beta-D-glucuronate) + 3'-phosphoadenylyl sulfate = 16alpha,17beta-estriol 3-O-(3-sulfo-beta-D-glucuronate) + adenosine 3',5'-bisphosphate + H(+). It carries out the reaction 16alpha,17beta-estriol 16-O-(beta-D-glucuronate) + 3'-phosphoadenylyl sulfate = 16alpha,17beta-estriol 16-O-(3-sulfo-beta-D-glucuronate) + adenosine 3',5'-bisphosphate + H(+). It catalyses the reaction 16alpha,17beta-estriol 17-O-(beta-D-glucuronate) + 3'-phosphoadenylyl sulfate = 16alpha,17beta-estriol 17-O-(3-sulfo-beta-D-glucuronate) + adenosine 3',5'-bisphosphate + H(+). The enzyme catalyses estrone 3-O-(beta-D-glucuronate) + 3'-phosphoadenylyl sulfate = estrone 3-O-(3-sulfo-beta-D-glucuronate) + adenosine 3',5'-bisphosphate + H(+). The catalysed reaction is 3alpha,20alpha-dihydroxy-5beta-pregnane 3-O-(beta-D-glucuronate) + 3'-phosphoadenylyl sulfate = 3alpha,20alpha-dihydroxy-5beta-pregnane 3-O-(3-sulfo-beta-D-glucuronate) + adenosine 3',5'-bisphosphate + H(+). It carries out the reaction testosterone 17-O-(beta-D-glucuronate) + 3'-phosphoadenylyl sulfate = testosterone 17-O-(3-sulfo-beta-D-glucuronate) + adenosine 3',5'-bisphosphate + H(+). It catalyses the reaction 3beta-androst-5-en-17-one 3-O-(beta-D-glucuronate) + 3'-phosphoadenylyl sulfate = 3beta-androst-5-en-17-one 3-O-(3-sulfo-beta-D-glucuronate) + adenosine 3',5'-bisphosphate + H(+). The enzyme catalyses 3alpha,17alpha-dihydroxy-5beta-androstane-11-one-17beta-carboxylate 3-O-(beta-D-glucuronate) + 3'-phosphoadenylyl sulfate = 3alpha,17alpha-dihydroxy-5beta-androstane-11-one-17beta-carboxylate 3-O-(3-sulfo-beta-D-glucuronate) + adenosine 3',5'-bisphosphate + H(+). The catalysed reaction is 3alpha-hydroxyetiocholan-17-one 3-O-(beta-D-glucuronate) + 3'-phosphoadenylyl sulfate = 3alpha-hydroxyetiocholan-17-one 3-O-(3-sulfo-beta-D-glucuronate) + adenosine 3',5'-bisphosphate + H(+). It functions in the pathway steroid metabolism. The protein operates within protein modification; carbohydrate sulfation. Its function is as follows. Catalyzes the transfer of sulfate from 3'-phosphoadenylyl sulfate (PAPS) to position 3 of terminal glucuronic acid of both protein- and lipid-linked oligosaccharides. Participates in biosynthesis of HNK-1 carbohydrate structure 3-O-sulfo-beta-D-GlcA-(1-&gt;3)-beta-D-Gal-(1-&gt;4)-D-GlcNAc-R, a sulfated glucuronyl-lactosaminyl residue carried by many neural recognition molecules, which is involved in cell interactions during ontogenetic development and in synaptic plasticity in the adult. May be indirectly involved in synapse plasticity of the hippocampus, via its role in HNK-1 biosynthesis. Sulfates terminal glucuronyl residue of the laminin globular (LG)-domain binding epitope on DAG1/alpha-dystroglycan and prevents further polymerization by LARGE1 glycosyltransferase. Likely defines the chain length of LG epitope, conferring binding specificity to extracellular matrix components. Plays a role in down-regulating the steroid hormones. Sulfates glucuronidated estrogens and androgens with an impact in hormone cycle and fertility. Has a preference for glucuronyl moiety at the 3-hydroxyl group of a sterol ring rather than the 17-hydroxyl group, showing high catalytic efficiency for 17beta-estradiol 3-O-(beta-D-glucuronate) and dehydroepiandrosterone 3-O-(beta-D-glucuronate) hormones. This chain is Carbohydrate sulfotransferase 10 (Chst10), found in Rattus norvegicus (Rat).